The sequence spans 392 residues: Integrin-linked kinase-associated serine/threonine phosphatase 2C (392 aa).

The residue at position 1 (Met-1) is an N-acetylmethionine. Positions 1–90 (MDLFGDLPEP…TSEEEKNGSE (90 aa)) are disordered. Position 13 is a phosphoserine (Ser-13). The span at 56 to 70 (SGDSGSLATSISQMV) shows a compositional bias: polar residues. The segment covering 72–90 (TEGKGAKRKTSEEEKNGSE) has biased composition (basic and acidic residues). Residues 108 to 390 (KGYVAERKGE…DNVTVMVVRI (283 aa)) enclose the PPM-type phosphatase domain. Mn(2+) contacts are provided by Asp-152 and Gly-153. At Lys-210 the chain carries N6-acetyllysine. Asp-326 and Asp-381 together coordinate Mn(2+).

The protein belongs to the PP2C family. In terms of assembly, interacts with ILK. Specific association with ILK is independent of the catalytic activity of either partner. It depends on Mg(2+) as a cofactor. Mn(2+) serves as cofactor. Widely expressed. Highest levels expressed in striated muscle. Much lower levels evident in various smooth muscle tissues.

Its subcellular location is the cytoplasm. The catalysed reaction is O-phospho-L-seryl-[protein] + H2O = L-seryl-[protein] + phosphate. It carries out the reaction O-phospho-L-threonyl-[protein] + H2O = L-threonyl-[protein] + phosphate. Inhibited rather than stimulated by magnesium. In terms of biological role, protein phosphatase that may play a role in regulation of cell cycle progression via dephosphorylation of its substrates whose appropriate phosphorylation states might be crucial for cell proliferation. Selectively associates with integrin linked kinase (ILK), to modulate cell adhesion and growth factor signaling. Inhibits the ILK-GSK3B signaling axis and may play an important role in inhibiting oncogenic transformation. The polypeptide is Integrin-linked kinase-associated serine/threonine phosphatase 2C (ILKAP) (Homo sapiens (Human)).